Reading from the N-terminus, the 307-residue chain is Pyridoxal 5'-phosphate synthase subunit PdxS (307 aa).

Residues 1–10 are compositionally biased toward basic residues; the sequence is MRGQPRPKLR. The interval 1-20 is disordered; sequence MRGQPRPKLRRMTEQQTGTP. Asp37 contributes to the D-ribose 5-phosphate binding site. The active-site Schiff-base intermediate with D-ribose 5-phosphate is the Lys94. D-ribose 5-phosphate is bound at residue Gly166. D-glyceraldehyde 3-phosphate is bound at residue Arg178. D-ribose 5-phosphate contacts are provided by residues Gly227 and 248-249; that span reads GS.

This sequence belongs to the PdxS/SNZ family. In terms of assembly, in the presence of PdxT, forms a dodecamer of heterodimers.

The catalysed reaction is aldehydo-D-ribose 5-phosphate + D-glyceraldehyde 3-phosphate + L-glutamine = pyridoxal 5'-phosphate + L-glutamate + phosphate + 3 H2O + H(+). It functions in the pathway cofactor biosynthesis; pyridoxal 5'-phosphate biosynthesis. In terms of biological role, catalyzes the formation of pyridoxal 5'-phosphate from ribose 5-phosphate (RBP), glyceraldehyde 3-phosphate (G3P) and ammonia. The ammonia is provided by the PdxT subunit. Can also use ribulose 5-phosphate and dihydroxyacetone phosphate as substrates, resulting from enzyme-catalyzed isomerization of RBP and G3P, respectively. In Deinococcus radiodurans (strain ATCC 13939 / DSM 20539 / JCM 16871 / CCUG 27074 / LMG 4051 / NBRC 15346 / NCIMB 9279 / VKM B-1422 / R1), this protein is Pyridoxal 5'-phosphate synthase subunit PdxS.